The chain runs to 256 residues: Trans-aconitate 2-methyltransferase (256 aa).

It belongs to the methyltransferase superfamily. Tam family.

It is found in the cytoplasm. It carries out the reaction trans-aconitate + S-adenosyl-L-methionine = (E)-3-(methoxycarbonyl)pent-2-enedioate + S-adenosyl-L-homocysteine. In terms of biological role, catalyzes the S-adenosylmethionine monomethyl esterification of trans-aconitate. This is Trans-aconitate 2-methyltransferase from Rhizobium rhizogenes (strain K84 / ATCC BAA-868) (Agrobacterium radiobacter).